A 215-amino-acid chain; its full sequence is Uracil phosphoribosyltransferase (215 aa).

Residues arginine 77, arginine 102, and 129 to 137 contribute to the 5-phospho-alpha-D-ribose 1-diphosphate site; that span reads DPMLATGGS. Uracil is bound by residues isoleucine 193 and 198-200; that span reads GDA. Aspartate 199 is a 5-phospho-alpha-D-ribose 1-diphosphate binding site.

The protein belongs to the UPRTase family. Mg(2+) serves as cofactor.

The catalysed reaction is UMP + diphosphate = 5-phospho-alpha-D-ribose 1-diphosphate + uracil. Its pathway is pyrimidine metabolism; UMP biosynthesis via salvage pathway; UMP from uracil: step 1/1. With respect to regulation, allosterically activated by GTP. Functionally, catalyzes the conversion of uracil and 5-phospho-alpha-D-ribose 1-diphosphate (PRPP) to UMP and diphosphate. In Corynebacterium urealyticum (strain ATCC 43042 / DSM 7109), this protein is Uracil phosphoribosyltransferase.